Here is a 146-residue protein sequence, read N- to C-terminus: Antirestriction protein KlcA (146 aa).

It belongs to the antirestriction protein family.

Could be involved in overcoming restriction barriers during establishment after conjugative transfer. This chain is Antirestriction protein KlcA (klcA), found in Escherichia coli.